We begin with the raw amino-acid sequence, 302 residues long: tRNA dimethylallyltransferase (302 aa).

9-16 (GPTGSGKT) lines the ATP pocket. A substrate-binding site is contributed by 11–16 (TGSGKT).

This sequence belongs to the IPP transferase family. In terms of assembly, monomer. Mg(2+) is required as a cofactor.

The enzyme catalyses adenosine(37) in tRNA + dimethylallyl diphosphate = N(6)-dimethylallyladenosine(37) in tRNA + diphosphate. Catalyzes the transfer of a dimethylallyl group onto the adenine at position 37 in tRNAs that read codons beginning with uridine, leading to the formation of N6-(dimethylallyl)adenosine (i(6)A). In Thermus thermophilus (strain ATCC BAA-163 / DSM 7039 / HB27), this protein is tRNA dimethylallyltransferase.